The sequence spans 229 residues: 2-C-methyl-D-erythritol 4-phosphate cytidylyltransferase (229 aa).

This sequence belongs to the IspD/TarI cytidylyltransferase family. IspD subfamily.

The enzyme catalyses 2-C-methyl-D-erythritol 4-phosphate + CTP + H(+) = 4-CDP-2-C-methyl-D-erythritol + diphosphate. It participates in isoprenoid biosynthesis; isopentenyl diphosphate biosynthesis via DXP pathway; isopentenyl diphosphate from 1-deoxy-D-xylulose 5-phosphate: step 2/6. Functionally, catalyzes the formation of 4-diphosphocytidyl-2-C-methyl-D-erythritol from CTP and 2-C-methyl-D-erythritol 4-phosphate (MEP). This is 2-C-methyl-D-erythritol 4-phosphate cytidylyltransferase from Bacillus pumilus (strain SAFR-032).